A 1847-amino-acid chain; its full sequence is Replication factor C small subunit (1847 aa).

3 DOD-type homing endonuclease domains span residues 179–311 (WLGY…RFGI), 780–927 (MLGL…ISGI), and 1348–1508 (LLGF…EFEV).

This sequence belongs to the activator 1 small subunits family. RfcS subfamily. In terms of assembly, heteromultimer composed of small subunits (RfcS) and large subunits (RfcL). Post-translationally, this protein undergoes a protein self splicing that involves a post-translational excision of the intervening region (intein) followed by peptide ligation.

Its function is as follows. Part of the RFC clamp loader complex which loads the PCNA sliding clamp onto DNA. This chain is Replication factor C small subunit (rfcS), found in Methanocaldococcus jannaschii (strain ATCC 43067 / DSM 2661 / JAL-1 / JCM 10045 / NBRC 100440) (Methanococcus jannaschii).